A 202-amino-acid chain; its full sequence is S-modulin (202 aa).

Gly-2 carries N-myristoyl glycine lipidation. EF-hand domains follow at residues 25-60, 61-96, 97-132, and 147-182; these read QEEL…FPDA, DPKA…TSSG, KANQ…IFKM, and TPEK…NKEI. Ca(2+) is bound by residues Asp-74, Asn-76, Asp-78, Thr-80, Glu-85, Asp-110, Asp-112, Asn-114, Thr-116, and Glu-121.

Belongs to the recoverin family. In terms of processing, the N-terminus is blocked.

Its function is as follows. Calcium-dependent regulator of light sensitivity of cGMP phosphodiesterase in rod outer segments. Controls rhodopsin phosphorylation in a Ca(2+)-dependent manner. The chain is S-modulin from Aquarana catesbeiana (American bullfrog).